A 486-amino-acid chain; its full sequence is Glutamyl-tRNA(Gln) amidotransferase subunit A (486 aa).

Catalysis depends on charge relay system residues Lys-77 and Ser-152. The active-site Acyl-ester intermediate is Ser-176.

This sequence belongs to the amidase family. GatA subfamily. Heterotrimer of A, B and C subunits.

The enzyme catalyses L-glutamyl-tRNA(Gln) + L-glutamine + ATP + H2O = L-glutaminyl-tRNA(Gln) + L-glutamate + ADP + phosphate + H(+). Functionally, allows the formation of correctly charged Gln-tRNA(Gln) through the transamidation of misacylated Glu-tRNA(Gln) in organisms which lack glutaminyl-tRNA synthetase. The reaction takes place in the presence of glutamine and ATP through an activated gamma-phospho-Glu-tRNA(Gln). The polypeptide is Glutamyl-tRNA(Gln) amidotransferase subunit A (Lactococcus lactis subsp. cremoris (strain SK11)).